The following is a 275-amino-acid chain: Probable CCR4-associated factor 1 homolog 7 (275 aa).

A divalent metal cation is bound by residues Asp-40, Glu-42, Asp-167, and Asp-236.

It belongs to the CAF1 family. As to quaternary structure, component of the CCR4-NOT complex, at least composed of CRR4 and CAF1 proteins. A divalent metal cation serves as cofactor.

It localises to the nucleus. The protein localises to the cytoplasm. The catalysed reaction is Exonucleolytic cleavage of poly(A) to 5'-AMP.. Ubiquitous transcription factor required for a diverse set of processes. It is a component of the CCR4 complex involved in the control of gene expression. The chain is Probable CCR4-associated factor 1 homolog 7 (CAF1-7) from Arabidopsis thaliana (Mouse-ear cress).